Consider the following 802-residue polypeptide: Copper-exporting P-type ATPase (802 aa).

2 HMA domains span residues 5-70 (KKTT…YGVA) and 72-138 (ETVE…YDAS). Residues C16, C19, C83, and C86 each coordinate Cu(+). 6 consecutive transmembrane segments (helical) span residues 161–181 (LIIS…HLFN), 192–212 (WFQF…FYVG), 224–244 (MDVL…YEMV), 256–276 (LYFE…YLEA), 411–431 (YFVP…ITLV), and 438–458 (PALV…LGLA). D495 functions as the 4-aspartylphosphate intermediate in the catalytic mechanism. Residues D690 and D694 each coordinate Mg(2+). The next 2 helical transmembrane spans lie at 748 to 767 (LFWA…LGLL) and 771 to 790 (VAGA…ALRL).

This sequence belongs to the cation transport ATPase (P-type) (TC 3.A.3) family. Type IB subfamily.

It is found in the cell membrane. The catalysed reaction is Cu(+)(in) + ATP + H2O = Cu(+)(out) + ADP + phosphate + H(+). Functionally, involved in copper export. The chain is Copper-exporting P-type ATPase (copA) from Staphylococcus aureus (strain MRSA252).